The chain runs to 65 residues: uncharacterized protein (65 aa).

This sequence to E.coli YjiX.

This is an uncharacterized protein from Escherichia coli O6:H1 (strain CFT073 / ATCC 700928 / UPEC).